The primary structure comprises 139 residues: D-ribose pyranase (139 aa).

H20 functions as the Proton donor in the catalytic mechanism. Substrate contacts are provided by residues D28, H106, and 128–130; that span reads FAN.

The protein belongs to the RbsD / FucU family. RbsD subfamily. As to quaternary structure, homodecamer.

The protein resides in the cytoplasm. It catalyses the reaction beta-D-ribopyranose = beta-D-ribofuranose. The protein operates within carbohydrate metabolism; D-ribose degradation; D-ribose 5-phosphate from beta-D-ribopyranose: step 1/2. In terms of biological role, catalyzes the interconversion of beta-pyran and beta-furan forms of D-ribose. The protein is D-ribose pyranase of Klebsiella pneumoniae (strain 342).